Reading from the N-terminus, the 173-residue chain is Large ribosomal subunit protein bL9 (173 aa).

Residues 151–173 (YDDTPDRTETEESTKELQEEHAE) form a disordered region.

It belongs to the bacterial ribosomal protein bL9 family.

Binds to the 23S rRNA. The sequence is that of Large ribosomal subunit protein bL9 from Lawsonia intracellularis (strain PHE/MN1-00).